The following is a 136-amino-acid chain: Small ribosomal subunit protein uS8c (136 aa).

The protein belongs to the universal ribosomal protein uS8 family. As to quaternary structure, part of the 30S ribosomal subunit.

The protein resides in the plastid. Its subcellular location is the chloroplast. In terms of biological role, one of the primary rRNA binding proteins, it binds directly to 16S rRNA central domain where it helps coordinate assembly of the platform of the 30S subunit. The protein is Small ribosomal subunit protein uS8c (rps8) of Agrostis stolonifera (Creeping bentgrass).